The following is a 201-amino-acid chain: Twin horsetail protein 2 (201 aa).

It localises to the nucleus. In terms of biological role, required for correct meiotic chromosome segregation and recombination. The chain is Twin horsetail protein 2 (tht2) from Schizosaccharomyces pombe (strain 972 / ATCC 24843) (Fission yeast).